A 209-amino-acid polypeptide reads, in one-letter code: Large ribosomal subunit protein uL3 (209 aa).

The interval 125–148 is disordered; that stretch reads RHGQSRGPMAHGSRYHRRPGSMGP.

It belongs to the universal ribosomal protein uL3 family. Part of the 50S ribosomal subunit. Forms a cluster with proteins L14 and L19.

In terms of biological role, one of the primary rRNA binding proteins, it binds directly near the 3'-end of the 23S rRNA, where it nucleates assembly of the 50S subunit. This chain is Large ribosomal subunit protein uL3, found in Lysinibacillus sphaericus (strain C3-41).